The primary structure comprises 281 residues: Para-Rep C9 (281 aa).

The region spanning 1-95 is the CRESS-DNA virus Rep endonuclease domain; sequence MSAVNWVFTL…VAGPWSYGEL (95 aa). Residues 7 to 10 carry the RCR-1 motif; sequence VFTL. The a divalent metal cation site is built by Glu-33 and His-39. Positions 39 to 41 match the RCR-2 motif; that stretch reads HIQ. The short motif at 48 to 69 is the Nuclear localization signal element; it reads KKAKMNTVKNIIGGNPHLEKMK. The active-site For DNA cleavage activity is the Tyr-78. The short motif at 78–81 is the RCR-3 element; sequence YAQK. Glu-83 is a binding site for a divalent metal cation. A Nuclear localization signal motif is present at residues 95-101; it reads LLKKGSH. 178-180 serves as a coordination point for ATP; that stretch reads GKS.

This sequence belongs to the nanoviridea/circoviridae replication-associated protein family. In terms of assembly, homooligomer (Potential). Rep binds to repeated DNA motifs (iterons). Mg(2+) is required as a cofactor. Mn(2+) serves as cofactor.

It is found in the host nucleus. It catalyses the reaction ATP + H2O = ADP + phosphate + H(+). Functionally, initiates and terminates the replication only of its own subviral DNA molecule. The closed circular ssDNA genome is first converted to a superhelical dsDNA. Rep binds a specific hairpin at the genome origin of replication. Introduces an endonucleolytic nick within the intergenic region of the genome, thereby initiating the rolling circle replication (RCR). Following cleavage, binds covalently to the 5'-phosphate of DNA as a tyrosyl ester. The cleavage gives rise to a free 3'-OH that serves as a primer for the cellular DNA polymerase. The polymerase synthesizes the (+) strand DNA by rolling circle mechanism. After one round of replication, a Rep-catalyzed nucleotidyl transfer reaction releases a circular single-stranded virus genome, thereby terminating the replication. Displays origin-specific DNA cleavage, nucleotidyl transferase, ATPase and helicase activities. This chain is Para-Rep C9 (C9), found in Faba bean necrotic yellows C9 alphasatellite (FBNYC9A).